Consider the following 234-residue polypeptide: MRDEIFKEPISKQFEFDDFVASVFDDMISRSVPFYDVSSNLNAKLLAKILPKSAKVCDLGCSTANSLLLLNNLRNDLVLSGVDNSEAMLANAKNKAKAYGASINFILADITECELAGFDAVLANYTLQFIRPPKRADLVQKIYNGLNENGVFLFSEKIIFEDKKLTKSVIEIYEDYKQAQGYSRYEIAQKREALENVLVPYTEEENRNLALNAGFKRVESTFKWGNFMSFLAFK.

S-adenosyl-L-methionine is bound by residues Tyr-35, 60–62 (GCS), 83–84 (DN), 109–110 (DI), Asn-124, and Arg-191.

It belongs to the class I-like SAM-binding methyltransferase superfamily. Cx-SAM synthase family. In terms of assembly, homodimer.

The catalysed reaction is prephenate + S-adenosyl-L-methionine = carboxy-S-adenosyl-L-methionine + 3-phenylpyruvate + H2O. Its function is as follows. Catalyzes the conversion of S-adenosyl-L-methionine (SAM) to carboxy-S-adenosyl-L-methionine (Cx-SAM). In Campylobacter concisus (strain 13826), this protein is Carboxy-S-adenosyl-L-methionine synthase.